The chain runs to 39 residues: Photosystem II reaction center protein L (39 aa).

The helical transmembrane segment at 18 to 38 (SLYLGLLVVFTTGILFSSYFF) threads the bilayer.

The protein belongs to the PsbL family. In terms of assembly, PSII is composed of 1 copy each of membrane proteins PsbA, PsbB, PsbC, PsbD, PsbE, PsbF, PsbH, PsbI, PsbJ, PsbK, PsbL, PsbM, PsbT, PsbX, PsbY, PsbZ, Psb30/Ycf12, peripheral proteins PsbO, CyanoQ (PsbQ), PsbU, PsbV and a large number of cofactors. It forms dimeric complexes.

The protein localises to the cellular thylakoid membrane. In terms of biological role, one of the components of the core complex of photosystem II (PSII). PSII is a light-driven water:plastoquinone oxidoreductase that uses light energy to abstract electrons from H(2)O, generating O(2) and a proton gradient subsequently used for ATP formation. It consists of a core antenna complex that captures photons, and an electron transfer chain that converts photonic excitation into a charge separation. This subunit is found at the monomer-monomer interface and is required for correct PSII assembly and/or dimerization. In Synechococcus sp. (strain WH7803), this protein is Photosystem II reaction center protein L.